We begin with the raw amino-acid sequence, 414 residues long: Translation initiation factor 2 subunit gamma (414 aa).

One can recognise a tr-type G domain in the interval 8-206 (QPEVNIGVVG…AIEKFIPTPP (199 aa)). The segment at 17-24 (GHVDHGKT) is G1. Asp20, Thr24, Gly45, and Thr47 together coordinate Mg(2+). 20–25 (DHGKTT) contacts GTP. The segment at 45 to 49 (GMTIK) is G2. Positions 60, 63, 75, and 77 each coordinate Zn(2+). The segment at 93–96 (DAPG) is G3. Residues 149 to 152 (NKVD) and 184 to 186 (SAL) contribute to the GTP site. The tract at residues 149–152 (NKVD) is G4. The tract at residues 184 to 186 (SAL) is G5.

It belongs to the TRAFAC class translation factor GTPase superfamily. Classic translation factor GTPase family. EIF2G subfamily. Heterotrimer composed of an alpha, a beta and a gamma chain. It depends on Mg(2+) as a cofactor.

It catalyses the reaction GTP + H2O = GDP + phosphate + H(+). In terms of biological role, eIF-2 functions in the early steps of protein synthesis by forming a ternary complex with GTP and initiator tRNA. In Aeropyrum pernix (strain ATCC 700893 / DSM 11879 / JCM 9820 / NBRC 100138 / K1), this protein is Translation initiation factor 2 subunit gamma.